The chain runs to 305 residues: Superkiller complex protein 8 (305 aa).

At M1 the chain carries N-acetylmethionine. An N-acetylthreonine; in WD repeat-containing protein 61, N-terminally processed modification is found at T2. WD repeat units lie at residues 14–57, 62–101, 104–143, 146–187, 188–227, 230–269, and 272–305; these read AHDD…LELQ, GHQL…QMKS, AGPV…KEYS, TRGK…HTLE, GHAM…LAGT, GHAS…CIHT, and DHQD…DCPI.

It belongs to the SKI8 family. As to quaternary structure, component of the PAF1 complex, which consists of CDC73, PAF1, LEO1, CTR9, RTF1 and SKIC8. The PAF1 complex interacts with PHF5A. Within the PAF1 complex interacts directly with PHF5A. Component of the SKI complex which consists of SKIC2, SKIC3 and SKIC8.

It localises to the nucleus. It is found in the cytoplasm. Its function is as follows. Component of the PAF1 complex (PAF1C) which has multiple functions during transcription by RNA polymerase II and is implicated in regulation of development and maintenance of embryonic stem cell pluripotency. PAF1C associates with RNA polymerase II through interaction with POLR2A CTD non-phosphorylated and 'Ser-2'- and 'Ser-5'-phosphorylated forms and is involved in transcriptional elongation, acting both independently and synergistically with TCEA1 and in cooperation with the DSIF complex and HTATSF1. PAF1C is required for transcription of Hox and Wnt target genes. PAF1C is involved in hematopoiesis and stimulates transcriptional activity of KMT2A/MLL1; it promotes leukemogenesis through association with KMT2A/MLL1-rearranged oncoproteins, such as KMT2A/MLL1-MLLT3/AF9 and KMT2A/MLL1-MLLT1/ENL. PAF1C is involved in histone modifications such as ubiquitination of histone H2B and methylation on histone H3 'Lys-4' (H3K4me3). PAF1C recruits the RNF20/40 E3 ubiquitin-protein ligase complex and the E2 enzyme UBE2A or UBE2B to chromatin which mediate monoubiquitination of 'Lys-120' of histone H2B (H2BK120ub1); UB2A/B-mediated H2B ubiquitination is proposed to be coupled to transcription. PAF1C is involved in mRNA 3' end formation probably through association with cleavage and poly(A) factors. In case of infection by influenza A strain H3N2, PAF1C associates with viral NS1 protein, thereby regulating gene transcription. Required for mono- and trimethylation on histone H3 'Lys-4' (H3K4me3), dimethylation on histone H3 'Lys-79' (H3K4me3). Required for Hox gene transcription. Also acts as a component of the SKI complex, a multiprotein complex that assists the RNA-degrading exosome during the mRNA decay and quality-control pathways. The SKI complex catalyzes mRNA extraction from 80S ribosomal complexes in the 3'-5' direction and channels mRNA to the cytosolic exosome for degradation. SKI-mediated extraction of mRNA from stalled ribosomes allow binding of the Pelota-HBS1L complex and subsequent ribosome disassembly by ABCE1 for ribosome recycling. In Mus musculus (Mouse), this protein is Superkiller complex protein 8 (Skic8).